We begin with the raw amino-acid sequence, 239 residues long: MMKLALSQPPFSGTLLMLVVSILLLWEKAASIPACMVEEGDCWDPLQETFNSAIQRAETLCNLADQLYVEFYQNQFSSRQFADLNSKLIKRDETVLKAGIYCHSTLAKPQTRGGNFEIEEHLKMLINFVGSWISPLFHLVIELSAMEGVPETILCKVKDLEENNRQLLDDLRWILTKVSPTAEIREEFPSWEHLSFLKSSNKNNKFLAMFNLSNCLDNDTKFTLHHLRIFKCLITGKDC.

Positions 1-31 (MMKLALSQPPFSGTLLMLVVSILLLWEKAAS) are cleaved as a signal peptide. Cystine bridges form between C35/C42 and C102/C215. Residues N211 and N218 are each glycosylated (N-linked (GlcNAc...) asparagine). A disulfide bridge connects residues C232 and C239.

The protein belongs to the somatotropin/prolactin family. As to expression, placental basal zone cells.

It is found in the secreted. This Rattus norvegicus (Rat) protein is Prolactin-8A4 (Prl8a4).